Here is a 662-residue protein sequence, read N- to C-terminus: Phosphomethylpyrimidine synthase (662 aa).

Residues asparagine 235, methionine 264, tyrosine 293, histidine 329, 349–351, 390–393, and glutamate 429 each bind substrate; these read SRG and DGMR. Histidine 433 is a binding site for Zn(2+). Tyrosine 456 lines the substrate pocket. Histidine 497 lines the Zn(2+) pocket. The [4Fe-4S] cluster site is built by cysteine 577, cysteine 580, and cysteine 585.

This sequence belongs to the ThiC family. In terms of assembly, homodimer. Requires [4Fe-4S] cluster as cofactor.

It carries out the reaction 5-amino-1-(5-phospho-beta-D-ribosyl)imidazole + S-adenosyl-L-methionine = 4-amino-2-methyl-5-(phosphooxymethyl)pyrimidine + CO + 5'-deoxyadenosine + formate + L-methionine + 3 H(+). It participates in cofactor biosynthesis; thiamine diphosphate biosynthesis. In terms of biological role, catalyzes the synthesis of the hydroxymethylpyrimidine phosphate (HMP-P) moiety of thiamine from aminoimidazole ribotide (AIR) in a radical S-adenosyl-L-methionine (SAM)-dependent reaction. The protein is Phosphomethylpyrimidine synthase of Shewanella halifaxensis (strain HAW-EB4).